Here is a 3640-residue protein sequence, read N- to C-terminus: Serine/threonine-protein kinase SMG1 (3640 aa).

A compositionally biased stretch (polar residues) spans Asn-21–Gln-34. Residues Asn-21–Val-41 are disordered. The region spanning Tyr-1495–Ser-1843 is the FAT domain. One copy of the HEAT repeat lies at Ala-1794–Ser-1829. Positions Gly-1870–Gly-1890 are disordered. The segment covering Gly-1874–Ser-1887 has biased composition (low complexity). Residues Val-2102–Phe-2441 form the PI3K/PI4K catalytic domain. Residues Ile-2108–Lys-2114 form a G-loop region. The segment at Gly-2310–Asn-2318 is catalytic loop. Residues His-2330–Thr-2354 form an activation loop region. One can recognise an FATC domain in the interval Arg-3608–Val-3640.

Belongs to the PI3/PI4-kinase family. It depends on Mn(2+) as a cofactor. Autophosphorylated.

The protein resides in the nucleus. Its subcellular location is the cytoplasm. The enzyme catalyses L-seryl-[protein] + ATP = O-phospho-L-seryl-[protein] + ADP + H(+). It catalyses the reaction L-threonyl-[protein] + ATP = O-phospho-L-threonyl-[protein] + ADP + H(+). Its function is as follows. Serine/threonine protein kinase involved in both mRNA surveillance and genotoxic stress response pathways. Recognizes the substrate consensus sequence [ST]-Q. Plays a central role in nonsense-mediated decay (NMD) of mRNAs containing premature stop codons by phosphorylating UPF1/RENT1. In Danio rerio (Zebrafish), this protein is Serine/threonine-protein kinase SMG1.